The following is a 649-amino-acid chain: Exoribonuclease 2 (649 aa).

One can recognise an RNB domain in the interval 190 to 517 (RKDLTDLDFI…NHRLLKSIIK (328 aa)). The 83-residue stretch at 562 to 644 (NQKFNAEITD…KTRSIIAKPV (83 aa)) folds into the S1 motif domain.

This sequence belongs to the RNR ribonuclease family. RNase II subfamily.

It localises to the cytoplasm. The catalysed reaction is Exonucleolytic cleavage in the 3'- to 5'-direction to yield nucleoside 5'-phosphates.. In terms of biological role, involved in mRNA degradation. Hydrolyzes single-stranded polyribonucleotides processively in the 3' to 5' direction. The polypeptide is Exoribonuclease 2 (Buchnera aphidicola subsp. Acyrthosiphon pisum (strain 5A)).